The following is a 142-amino-acid chain: Holo-[acyl-carrier-protein] synthase (142 aa).

Mg(2+) contacts are provided by Asp-8 and Glu-57.

Belongs to the P-Pant transferase superfamily. AcpS family. Mg(2+) is required as a cofactor.

The protein resides in the cytoplasm. The enzyme catalyses apo-[ACP] + CoA = holo-[ACP] + adenosine 3',5'-bisphosphate + H(+). Functionally, transfers the 4'-phosphopantetheine moiety from coenzyme A to a Ser of acyl-carrier-protein. The polypeptide is Holo-[acyl-carrier-protein] synthase (Maricaulis maris (strain MCS10) (Caulobacter maris)).